The sequence spans 525 residues: Lysine--tRNA ligase (525 aa).

Residues Glu-419 and Glu-426 each coordinate Mg(2+).

The protein belongs to the class-II aminoacyl-tRNA synthetase family. In terms of assembly, homodimer. Mg(2+) serves as cofactor.

The protein resides in the cytoplasm. The enzyme catalyses tRNA(Lys) + L-lysine + ATP = L-lysyl-tRNA(Lys) + AMP + diphosphate. The chain is Lysine--tRNA ligase (lysS) from Deinococcus radiodurans (strain ATCC 13939 / DSM 20539 / JCM 16871 / CCUG 27074 / LMG 4051 / NBRC 15346 / NCIMB 9279 / VKM B-1422 / R1).